The chain runs to 686 residues: MFGFIHESIRQLVIRKYGEDVWLQVLERSGFENGKENIVNHYYSDTDTYVLVDSVSIVLKVTKDQIWEMYGGFLITYSMEIGWDELVRSMSPNLKGFLDNLDSLHYFIDHVVYKANLRGPSFRCEENPDGTLMLHYFTGRPGLYHIVKGVVKEVAKLVFNLDISLVVQGRTQRSVHMNNGERVEEHVIFLIKNVEEPRRDSDTSTTSALTSVEPDFGEIIDDNLKVSLQDFSRALPYHFVLDESCRLVQCGDELYNHIPNELLQPGTPILRIFEINRPQIPLDFENICNFINAVFVLQVKTSPLRKKHMNAMTKEEREQEVEAMEEEVESNELTQGCHLKLKGQMMMLSTKKHIIYLCSPYVTSINELMQFGMRLTAMPLHDATRDLILLNQQRLSDVEVNLQLEANNEQLETMTHELEVERQKTDSILKDMLPRKIAKQLLSGEHLEPCEYEATVMFCDLPAFQQIIPVCQPKNIVKLLNEVFFKLDRIVVLRGVYKVETVSDSYMTVSGIPDYTSEHAENMCHVALGMMWEARSVMDPVNKTPFLLRIGLHSGTIIAGVVGTKMPRYCLFGETVTLASQMESLGVAGKIQCSSWTYSKAMETGRFEFSPRGRINVKGRGDVETYFLMRSLKKSIWEITDHERDVNVNSIEGYEELEIFIENAQTVKHDGHPKANQNHSATCTIA.

H105 lines the heme pocket. Coiled-coil stretches lie at residues 306 to 335 and 398 to 432; these read KKHM…ELTQ and VEVN…LKDM. The Guanylate cyclase domain maps to 455–583; that stretch reads TVMFCDLPAF…ETVTLASQME (129 aa). Mg(2+) contacts are provided by D460 and D504.

This sequence belongs to the adenylyl cyclase class-4/guanylyl cyclase family. In terms of assembly, heterodimer; with other soluble guanylate cyclases. Heme serves as cofactor. In terms of tissue distribution, expressed in a small number of neurons, corresponding to URX, AQR and PQR neurons.

The protein resides in the cytoplasm. It catalyses the reaction GTP = 3',5'-cyclic GMP + diphosphate. Its activity is regulated as follows. May be regulated by molecular oxygen. Probably not activated by nitric oxide (NO). Functionally, synthesizes cyclic GMP (cGMP) from GTP. May be involved in sensitivity to quinine by regulating egl-4 activity through the production of cGMP. This chain is Soluble guanylate cyclase gcy-34 (gcy-34), found in Caenorhabditis elegans.